Here is a 518-residue protein sequence, read N- to C-terminus: GMP synthase [glutamine-hydrolyzing] (518 aa).

Residues 6 to 200 form the Glutamine amidotransferase type-1 domain; sequence RLLIIDFGSQ…FVKLAGFKGD (195 aa). Cys84 (nucleophile) is an active-site residue. Active-site residues include His175 and Glu177. One can recognise a GMPS ATP-PPase domain in the interval 201-393; that stretch reads WTMGAYREEA…LGLPDSFIGR (193 aa). 228-234 contacts ATP; that stretch reads SGGVDSS.

Homodimer.

It catalyses the reaction XMP + L-glutamine + ATP + H2O = GMP + L-glutamate + AMP + diphosphate + 2 H(+). The protein operates within purine metabolism; GMP biosynthesis; GMP from XMP (L-Gln route): step 1/1. Functionally, catalyzes the synthesis of GMP from XMP. This chain is GMP synthase [glutamine-hydrolyzing], found in Cereibacter sphaeroides (strain ATCC 17025 / ATH 2.4.3) (Rhodobacter sphaeroides).